The sequence spans 436 residues: Zinc finger protein 101 (436 aa).

Residues 4 to 82 (VAFEDVAVNF…RKEGNEHRET (79 aa)) form the KRAB domain. The segment at 102 to 124 (CKCSVCGKVFLRHSFLDRHMRAH) adopts a C2H2-type 1 zinc-finger fold. Residues 128–141 (KRSECGGEWRETPR) are compositionally biased toward basic and acidic residues. Residues 128-164 (KRSECGGEWRETPRKQKQHGKASISPSSGARRTVTPT) form a disordered region. Residues 151–163 (ISPSSGARRTVTP) are compositionally biased toward polar residues. A C2H2-type 2 zinc finger spans residues 169-191 (YECKVCGKAFNSPNLFQIHQRTH). The C2H2-type 3; degenerate zinc-finger motif lies at 197–219 (YKCREIVRAFTVSSFFRKHGKMH). 7 C2H2-type zinc fingers span residues 225–247 (YECK…VRTH), 253–276 (YKCK…IRSH), 282–304 (HQCQ…ERTH), 310–332 (YECQ…ERAH), 338–360 (YECN…KKTH), 366–388 (YECT…EMTH), and 394–416 (FDCK…ERTH).

It belongs to the krueppel C2H2-type zinc-finger protein family. As to expression, expressed in a variety of adult and fetal tissues.

The protein localises to the nucleus. May be involved in transcriptional regulation. This chain is Zinc finger protein 101 (ZNF101), found in Homo sapiens (Human).